An 810-amino-acid chain; its full sequence is MPQSSPSAAATASDMDKNSGSSSSSASSGSSKGQQPPRSASAGPAGESKPKSDGKNSSGSKRYNRKREPSYPKNENFINQSRRSNSQKSKTFNKMPPQRGGGSSKLFSSSFNGGRRDEVAEAQRAEFSPAQFSGPKKINLNHLLNFTFEPRGQAGHFEGSGHGSWGKRNKWGHKPFNKELFLQANCQFVVSEDQDYTVHFADPDTLVNWDFVEQVRICSHEVPSCPICLYPPTAAKITRCGHIFCWACILHYLSLSEKTWSKCPICYSSVHKKDLKSVVATESRQYVVGDTITMQLMKREKGVLVALPKSKWMNVDHPIHLGDEQHSQYSKLLLASKEQVLRRVVQEEKAALERQLAEEKHTPESCFIEAAIQELKAREEALSGLAESRGEVPGVVAALEQRVLMAPLAKESVFQPRKGVLEYLSAFDEDATEVCSLGPPHPVALPLVEEEETVSEPEPEGLSEACEDLELVEDNLGEGTICTESSQQEPVSKPSVTHLSSSPCYYFYQAEDGQHMFLHPVNVRCLVREYGSLEQSPEKISATVVEISGYSMSEDMRQRHRYLSHLPLTCEFSICELALQPPLVSKETLEIFSDDIEKRKRQRQKKAREERRRERRIEMEENKKQGKYPEVHIPLENLQQFPAFNSYTCSSDSALGSTSTEGRGALSLSPLSRSPGSQADFLLTPLSPTASQGSPSFCVGSLEEDSPFPSFAQMLRVGKAKADVWPKTAPKKDENTLGPPAPVDSDGESDNSDRVPVPSFQNSFSQAIEAAFMKLDTPVTSDPLSEEKGGKKRKKQKQKLLFSTSVVHTK.

A compositionally biased stretch (low complexity) spans 1–31 (MPQSSPSAAATASDMDKNSGSSSSSASSGSS). Residues 1–119 (MPQSSPSAAA…SFNGGRRDEV (119 aa)) form a disordered region. S5 carries the phosphoserine modification. Over residues 76–92 (NFINQSRRSNSQKSKTF) the composition is skewed to polar residues. The segment at 101 to 185 (GGSSKLFSSS…FNKELFLQAN (85 aa)) is interaction with MEOX2. The segment covering 104–113 (SKLFSSSFNG) has biased composition (low complexity). Residues S110 and S128 each carry the phosphoserine modification. An RING-type zinc finger spans residues 225–267 (CPICLYPPTAAKITRCGHIFCWACILHYLSLSEKTWSKCPICY). Disordered stretches follow at residues 598–623 (KRKRQRQKKAREERRRERRIEMEENK), 652–674 (DSALGSTSTEGRGALSLSPLSRS), 722–759 (ADVWPKTAPKKDENTLGPPAPVDSDGESDNSDRVPVPS), and 775–810 (LDTPVTSDPLSEEKGGKKRKKQKQKLLFSTSVVHTK). Residues 607–623 (AREERRRERRIEMEENK) show a composition bias toward basic and acidic residues. The span at 652–661 (DSALGSTSTE) shows a compositional bias: polar residues. A compositionally biased stretch (low complexity) spans 662-674 (GRGALSLSPLSRS). The span at 722–735 (ADVWPKTAPKKDEN) shows a compositional bias: basic and acidic residues. A compositionally biased stretch (polar residues) spans 801–810 (LFSTSVVHTK).

It belongs to the RNF10 family. As to quaternary structure, interacts with MEOX2.

The protein resides in the cytoplasm. It is found in the nucleus. The enzyme catalyses S-ubiquitinyl-[E2 ubiquitin-conjugating enzyme]-L-cysteine + [acceptor protein]-L-lysine = [E2 ubiquitin-conjugating enzyme]-L-cysteine + N(6)-ubiquitinyl-[acceptor protein]-L-lysine.. It participates in protein modification; protein ubiquitination. In terms of biological role, E3 ubiquitin-protein ligase that catalyzes monoubiquitination of 40S ribosomal proteins RPS2/us5 and RPS3/us3 in response to ribosome stalling. Part of a ribosome quality control that takes place when ribosomes have stalled during translation initiation (iRQC): RNF10 acts by mediating monoubiquitination of RPS2/us5 and RPS3/us3, promoting their degradation by the proteasome. Also promotes ubiquitination of 40S ribosomal proteins in response to ribosome stalling during translation elongation. The action of RNF10 in iRQC is counteracted by USP10. May also act as a transcriptional factor involved in the regulation of MAG (Myelin-associated glycoprotein) expression. Acts as a regulator of Schwann cell differentiation and myelination. The polypeptide is E3 ubiquitin-protein ligase RNF10 (RNF10) (Bos taurus (Bovine)).